The sequence spans 268 residues: Putative hydro-lyase Arad_8587 (268 aa).

This sequence belongs to the D-glutamate cyclase family.

In Rhizobium rhizogenes (strain K84 / ATCC BAA-868) (Agrobacterium radiobacter), this protein is Putative hydro-lyase Arad_8587.